The sequence spans 435 residues: Methylenetetrahydrofolate--tRNA-(uracil-5-)-methyltransferase TrmFO (435 aa).

Residue glycine 10–glycine 15 coordinates FAD.

This sequence belongs to the MnmG family. TrmFO subfamily. It depends on FAD as a cofactor.

It localises to the cytoplasm. It carries out the reaction uridine(54) in tRNA + (6R)-5,10-methylene-5,6,7,8-tetrahydrofolate + NADH + H(+) = 5-methyluridine(54) in tRNA + (6S)-5,6,7,8-tetrahydrofolate + NAD(+). The catalysed reaction is uridine(54) in tRNA + (6R)-5,10-methylene-5,6,7,8-tetrahydrofolate + NADPH + H(+) = 5-methyluridine(54) in tRNA + (6S)-5,6,7,8-tetrahydrofolate + NADP(+). Its function is as follows. Catalyzes the folate-dependent formation of 5-methyl-uridine at position 54 (M-5-U54) in all tRNAs. The sequence is that of Methylenetetrahydrofolate--tRNA-(uracil-5-)-methyltransferase TrmFO from Halalkalibacterium halodurans (strain ATCC BAA-125 / DSM 18197 / FERM 7344 / JCM 9153 / C-125) (Bacillus halodurans).